The chain runs to 776 residues: Glucocorticoid receptor (776 aa).

3 disordered regions span residues 1 to 25 (MDPK…YNDK), 47 to 86 (SCPT…PQPD), and 394 to 415 (SSPG…STGP). The interval 1–419 (MDPKDLLKPS…STSTGPPPKL (419 aa)) is modulating. The span at 47–83 (SCPTSTASQSNTRQQQHFQKQLTATGDSTNGLNNNVP) shows a compositional bias: polar residues. Over residues 403–413 (SPSPSTSSTST) the composition is skewed to low complexity. NR C4-type zinc fingers lie at residues 420-440 (CLVC…CGSC) and 456-480 (CAGR…YRKC). Positions 420-485 (CLVCSDEASG…RYRKCLQAGM (66 aa)) form a DNA-binding region, nuclear receptor. The tract at residues 486-522 (NLEARKTKKKIKGIQQSTTATARESPETSMTRTLVPA) is hinge. Positions 523–757 (SVAQLTPTLI…FPDMLSEIIS (235 aa)) constitute an NR LBD domain.

Belongs to the nuclear hormone receptor family. NR3 subfamily. In terms of assembly, heteromultimeric cytoplasmic complex with HSP90. Upon ligand binding the complex undergoes a conformation change and moves to the nucleus, where it dissociates. Binds to DNA as a homodimer, and as heterodimer with NR3C2. Interaction with numerous other transcription factors modulates transcription activation. As to expression, expressed in liver with relative abundance.

The protein localises to the cytoplasm. It localises to the nucleus. The protein resides in the mitochondrion. Its subcellular location is the cytoskeleton. It is found in the spindle. The protein localises to the microtubule organizing center. It localises to the centrosome. Functionally, receptor for glucocorticoids (GC). Has a dual mode of action: as a transcription factor that binds to glucocorticoid response elements (GRE), both for nuclear and mitochondrial DNA, and as a modulator of other transcription factors. Affects inflammatory responses, cellular proliferation and differentiation in target tissues. Involved in chromatin remodeling. Plays a role in rapid mRNA degradation by binding to the 5' UTR of target mRNAs and interacting with PNRC2 in a ligand-dependent manner which recruits the RNA helicase UPF1 and the mRNA-decapping enzyme DCP1A, leading to RNA decay. Could act as a coactivator for STAT5-dependent transcription upon growth hormone (GH) stimulation and could reveal an essential role of hepatic GR in the control of body growth. Mediates glucocorticoid-induced apoptosis. Promotes accurate chromosome segregation during mitosis. May act as a tumor suppressor. May play a negative role in adipogenesis through the regulation of lipolytic and antilipogenic gene expression. The sequence is that of Glucocorticoid receptor (nr3c1) from Xenopus laevis (African clawed frog).